Reading from the N-terminus, the 547-residue chain is Inositol 1,4,5-trisphosphate receptor-interacting protein (547 aa).

Residues 1–15 form the signal peptide; sequence MAMGLFRVCLVVVTA. Residues 16–83 lie on the Extracellular side of the membrane; the sequence is IINHPLLFPR…EEGRQQNETR (68 aa). Asn27 and Asn80 each carry an N-linked (GlcNAc...) asparagine glycan. Residues 32 to 82 are a coiled coil; it reads ENEEEIIRKMQAHQEKLQLEQLRLEEEVARLAAEKEALEQVAEEGRQQNET. A helical membrane pass occupies residues 84-100; that stretch reads VAWDLWSTLCMILFLMI. At 101–547 the chain is on the cytoplasmic side; it reads EVWRQDHQEG…VPSDQPTPKS (447 aa). The interval 109 to 129 is disordered; it reads EGPSPECLGGEEDELPGLGGA. Phosphoserine is present on Ser547.

The protein belongs to the ITPRIP family. As to quaternary structure, interacts with ITPR. Detected in brain where it is concentrated in cerebellar Purkinje cells (at protein level).

It localises to the cell membrane. Its subcellular location is the nucleus outer membrane. Enhances Ca(2+)-mediated inhibition of inositol 1,4,5-triphosphate receptor (ITPR) Ca(2+) release. In Homo sapiens (Human), this protein is Inositol 1,4,5-trisphosphate receptor-interacting protein (ITPRIP).